The following is a 621-amino-acid chain: Lamin-C (621 aa).

The tract at residues 1–47 (MSARRVTLNTRVSRASTSTPVGGASTSSRVGATSPTSPTRTSRQQEK) is disordered. Residues 1–47 (MSARRVTLNTRVSRASTSTPVGGASTSSRVGATSPTSPTRTSRQQEK) form a head region. Positions 7-31 (TLNTRVSRASTSTPVGGASTSSRVG) are enriched in polar residues. Positions 33–42 (TSPTSPTRTS) are enriched in low complexity. The residue at position 34 (Ser34) is a Phosphoserine. In terms of domain architecture, IF rod spans 46 to 402 (EKEELQHLND…KLLCGEERRL (357 aa)). Residues 47–85 (KEELQHLNDRLACYIDRMRNLENENSRLTQELNLAQDTV) form a coil 1A region. The linker 1 stretch occupies residues 86–95 (NRETSNLKAV). Positions 96-233 (YEKELAAARK…QVHTQELTET (138 aa)) are coil 1B. A linker 2 region spans residues 234–257 (RSRRQIEISEIDGRLSRQYEAKLQ). The interval 258–403 (QSLQELRDQY…LLCGEERRLN (146 aa)) is coil 2. Positions 404-458 (IESPGRPTTDSGISSNGSHLTASASSRSGRVTPSGRRSATPGISGSSAVKRRRTV) are disordered. A tail region spans residues 404-621 (IESPGRPTTD…GVRSLFSLLF (218 aa)). Phosphoserine is present on residues Ser406 and Ser441. The segment covering 409-450 (RPTTDSGISSNGSHLTASASSRSGRVTPSGRRSATPGISGSS) has biased composition (polar residues). A Phosphothreonine modification is found at Thr443. The short motif at 453 to 458 (KRRRTV) is the Nuclear localization signal element. The LTD domain occupies 468–582 (SEYSVNAAAK…EDVASYDRVR (115 aa)). The disordered stretch occupies residues 585-605 (VSSHTSRHRSSGTPSTGFTLG).

It belongs to the intermediate filament family. In terms of assembly, interacts with MAN1. In terms of tissue distribution, first detected from late stage 12 in the oenocytes, abdominal segments, hindgut and posterior spiracles, with expression increasing in stage 13 (at protein level). In stage 14, also becomes detectable in the foregut (at protein level). Stage 15 shows expression in the epidermis, dorsal longitudinal trunk, pharynx, esophagus and proventriculus, with the dorsal pharyngeal musculature showing expression in late stage 15 (at protein level). In stage 16 embryos, also detected in the exit glia with increasing expression in the somatic musculature (at protein level). Also detected in the visceral mesoderm but not in the midgut or central nervous system until the end of embryogenesis (at protein level). In third instar larvae, detectable at varying levels in all cell types (at protein level). Expressed in spermatocytes (at protein level).

Its subcellular location is the nucleus. The protein localises to the nucleus lamina. Lamins are components of the nuclear lamina, a fibrous layer on the nucleoplasmic side of the inner nuclear membrane, which is thought to provide a framework for the nuclear envelope and may also interact with chromatin. In spermatocytes, regulates cytokinesis during meiosis. In Drosophila melanogaster (Fruit fly), this protein is Lamin-C (LamC).